The sequence spans 69 residues: Conotoxin SIVA (69 aa).

The N-terminal stretch at 1-21 (MGMRMMFTVFLLVVLATTVVS) is a signal peptide. Positions 22–38 (TPSDRASDGRNAAVHER) are excised as a propeptide. At Gln-39 the chain carries Pyrrolidone carboxylic acid. O-linked (HexNAc...) serine glycosylation is present at Ser-45. Residues Pro-55, Pro-60, and Pro-61 each carry the 4-hydroxyproline modification. Cys-68 bears the Cysteine amide mark.

This sequence belongs to the conotoxin A superfamily. In terms of processing, contains 3 disulfide bonds. Post-translationally, O-linked glycan consists of Hex3-HexNAc2 pentasaccharide. Expressed by the venom duct.

The protein resides in the secreted. In terms of biological role, neurotoxin with probable activity on sodium channel. Induces intense repetitive firing of the frog neuromuscular junction, leading to a tetanic contracture in muscle fiber (spastic paralysis). In vivo, shows the same effect as the whole venom when injected on fish. Intraperitoneal injection into fish induces a period of rapid swimming followed by a spastic paralysis with stiff fibrillating fins. At high doses, the peptide is lethal to both fish and mice. This chain is Conotoxin SIVA, found in Conus striatus (Striated cone).